We begin with the raw amino-acid sequence, 1103 residues long: Voltage-dependent calcium channel subunit alpha-2/delta-1 (1103 aa).

Residues 1–24 (MAAGCLLALTLTLFQSLLIGPSSE) form the signal peptide. The Extracellular portion of the chain corresponds to 25–1073 (EPFPSAVTIK…VLEDYTDCGG (1049 aa)). Residue N92 is glycosylated (N-linked (GlcNAc...) asparagine). Residue S119 is modified to Phosphoserine. Residues N136 and N184 are each glycosylated (N-linked (GlcNAc...) asparagine). One can recognise a VWFA domain in the interval 253–430 (DMLILVDVSG…INTQEYLDVL (178 aa)). A divalent metal cation-binding residues include D259, S261, and S263. An MIDAS-like motif motif is present at residues 259–263 (DVSGS). 13 N-linked (GlcNAc...) asparagine glycosylation sites follow: N324, N348, N468, N475, N604, N613, N675, N781, N824, N888, N895, N985, and N998. Cysteines 404 and 1059 form a disulfide. The Cache domain maps to 446–556 (WTNVYLDALE…NIQNPKSQEP (111 aa)). A helical transmembrane segment spans residues 1074–1094 (VSGLNPSLWYIIGIQFLLLWL). At 1095–1103 (VSGSTHRLL) the chain is on the cytoplasmic side.

The protein belongs to the calcium channel subunit alpha-2/delta family. Dimer formed of alpha-2-1 and delta-1 chains; disulfide-linked. Voltage-dependent calcium channels are multisubunit complexes, consisting of alpha-1 (CACNA1), alpha-2 (CACNA2D), beta (CACNB) and delta (CACNA2D) subunits in a 1:1:1:1 ratio. Proteolytically processed into subunits alpha-2-1 and delta-1 that are disulfide-linked. As to expression, isoform 1 is expressed in skeletal muscle. Isoform 2 is expressed in the central nervous system. Isoform 2, isoform 4 and isoform 5 are expressed in neuroblastoma cells. Isoform 3, isoform 4 and isoform 5 are expressed in the aorta.

It localises to the membrane. Its subcellular location is the cell membrane. Functionally, the alpha-2/delta subunit of voltage-dependent calcium channels regulates calcium current density and activation/inactivation kinetics of the calcium channel. Plays an important role in excitation-contraction coupling. The chain is Voltage-dependent calcium channel subunit alpha-2/delta-1 (CACNA2D1) from Homo sapiens (Human).